The sequence spans 558 residues: NAD(P)H-quinone oxidoreductase chain 4 (558 aa).

A run of 15 helical transmembrane segments spans residues Phe-25–Val-45, Trp-56–Gly-76, Val-90–Pro-110, Leu-111–Phe-131, Pro-133–Val-153, Leu-157–Trp-177, Phe-189–Phe-209, Gly-230–Val-250, Thr-264–Met-284, Phe-298–Phe-318, Ile-327–Glu-347, Ala-353–Ala-373, Phe-397–Val-417, Ile-438–Met-458, and Val-485–Met-505.

This sequence belongs to the complex I subunit 4 family.

The protein resides in the cellular thylakoid membrane. The catalysed reaction is a plastoquinone + NADH + (n+1) H(+)(in) = a plastoquinol + NAD(+) + n H(+)(out). It carries out the reaction a plastoquinone + NADPH + (n+1) H(+)(in) = a plastoquinol + NADP(+) + n H(+)(out). In terms of biological role, NDH-1 shuttles electrons from NAD(P)H, via FMN and iron-sulfur (Fe-S) centers, to quinones in the respiratory chain. The immediate electron acceptor for the enzyme in this species is believed to be plastoquinone. Couples the redox reaction to proton translocation (for every two electrons transferred, four hydrogen ions are translocated across the cytoplasmic membrane), and thus conserves the redox energy in a proton gradient. In Synechococcus sp. (strain CC9311), this protein is NAD(P)H-quinone oxidoreductase chain 4.